A 289-amino-acid chain; its full sequence is Metal-staphylopine import system permease protein CntC (289 aa).

The next 5 helical transmembrane spans lie at 13 to 33 (AVIA…APLV), 77 to 97 (LLYV…LGFL), 115 to 135 (VMLA…FGMG), 194 to 214 (IAII…GFSF), and 249 to 269 (IAIV…QIAI). The ABC transmembrane type-1 domain maps to 73–262 (IRPSLLYVFV…IIVMAFNFLS (190 aa)).

Belongs to the binding-protein-dependent transport system permease family. In terms of assembly, the complex is composed of two ATP-binding proteins (CntD and CntF), two transmembrane proteins (CntB and CntC) and a solute-binding protein (CntA).

The protein localises to the cell membrane. Its activity is regulated as follows. Nickel/cobalt import is reduced in the presence of zinc. Its function is as follows. Part of the ABC transporter complex CntABCDF (Opp1) involved in the uptake of metal in complex with the metallophore staphylopine (StP). Involved in the import of divalent metals ions such as nickel, cobalt and zinc. Probably responsible for the translocation of the substrate across the membrane. Plays a major role in nickel/cobalt import in zinc-depleted conditions. Contributes to virulence. Required for full urease activity in vitro. The polypeptide is Metal-staphylopine import system permease protein CntC (Staphylococcus aureus (strain NCTC 8325 / PS 47)).